A 104-amino-acid chain; its full sequence is Large ribosomal subunit protein uL23 (104 aa).

It belongs to the universal ribosomal protein uL23 family. Part of the 50S ribosomal subunit. Contacts protein L29, and trigger factor when it is bound to the ribosome.

Functionally, one of the early assembly proteins it binds 23S rRNA. One of the proteins that surrounds the polypeptide exit tunnel on the outside of the ribosome. Forms the main docking site for trigger factor binding to the ribosome. The protein is Large ribosomal subunit protein uL23 of Neisseria meningitidis serogroup B (strain ATCC BAA-335 / MC58).